The sequence spans 263 residues: Proteasome subunit beta type-5 (263 aa).

A propeptide spans 1–59 (MALASVLERPLSVNRRGFFGLGGRADLLDLGPGSPSDGLSLAAPSWGVPEEPRIEILHG) (removed in mature form). Residue Thr60 is the Nucleophile of the active site. Ala108 serves as a coordination point for bortezomib.

The protein belongs to the peptidase T1B family. In terms of assembly, the 26S proteasome consists of a 20S proteasome core and two 19S regulatory subunits. The 20S proteasome core is a barrel-shaped complex made of 28 subunits that are arranged in four stacked rings. The two outer rings are each formed by seven alpha subunits, and the two inner rings are formed by seven beta subunits. The proteolytic activity is exerted by three beta-subunits PSMB5, PSMB6 and PSMB7. Directly interacts with POMP. Interacts with ABCB1 and TAP1.

The protein resides in the cytoplasm. It is found in the nucleus. It catalyses the reaction Cleavage of peptide bonds with very broad specificity.. Its function is as follows. Component of the 20S core proteasome complex involved in the proteolytic degradation of most intracellular proteins. This complex plays numerous essential roles within the cell by associating with different regulatory particles. Associated with two 19S regulatory particles, forms the 26S proteasome and thus participates in the ATP-dependent degradation of ubiquitinated proteins. The 26S proteasome plays a key role in the maintenance of protein homeostasis by removing misfolded or damaged proteins that could impair cellular functions, and by removing proteins whose functions are no longer required. Associated with the PA200 or PA28, the 20S proteasome mediates ubiquitin-independent protein degradation. This type of proteolysis is required in several pathways including spermatogenesis (20S-PA200 complex) or generation of a subset of MHC class I-presented antigenic peptides (20S-PA28 complex). Within the 20S core complex, PSMB5 displays a chymotrypsin-like activity. This is Proteasome subunit beta type-5 from Bos taurus (Bovine).